The primary structure comprises 99 residues: Large ribosomal subunit protein uL23 (99 aa).

It belongs to the universal ribosomal protein uL23 family. As to quaternary structure, part of the 50S ribosomal subunit. Contacts protein L29, and trigger factor when it is bound to the ribosome.

Its function is as follows. One of the early assembly proteins it binds 23S rRNA. One of the proteins that surrounds the polypeptide exit tunnel on the outside of the ribosome. Forms the main docking site for trigger factor binding to the ribosome. The polypeptide is Large ribosomal subunit protein uL23 (Francisella philomiragia subsp. philomiragia (strain ATCC 25017 / CCUG 19701 / FSC 153 / O#319-036)).